The chain runs to 62 residues: UPF0434 protein Fphi_1862 (62 aa).

It belongs to the UPF0434 family.

The chain is UPF0434 protein Fphi_1862 from Francisella philomiragia subsp. philomiragia (strain ATCC 25017 / CCUG 19701 / FSC 153 / O#319-036).